We begin with the raw amino-acid sequence, 178 residues long: Conodipine-P2 (178 aa).

Positions 1–24 are cleaved as a signal peptide; the sequence is MKLLAPVLWAMAALGVTWLVAVDS. A 4-hydroxyproline mark is found at P38, P42, and P49. H54 is a catalytic residue. A propeptide spans 98–130 (interchain peptide); sequence KREVTSHRATSIAHSRLWKTALDQKSFLNRKAR. Position 131 is a pyrrolidone carboxylic acid (Q131). A 4-hydroxyproline modification is found at P137.

It belongs to the phospholipase A2 family. Group IX subfamily. Heterodimer of an alpha and a beta chain; probably disulfide-linked. It depends on Ca(2+) as a cofactor. Expressed by the venom duct.

The protein localises to the secreted. It carries out the reaction a 1,2-diacyl-sn-glycero-3-phosphocholine + H2O = a 1-acyl-sn-glycero-3-phosphocholine + a fatty acid + H(+). Functionally, catalyzes the calcium-dependent hydrolysis of the 2-acyl groups in 3-sn-phosphoglycerides. This Conus purpurascens (Purple cone) protein is Conodipine-P2.